Reading from the N-terminus, the 470-residue chain is ATP-dependent protease ATPase subunit HslU (470 aa).

ATP-binding positions include V22 and 64–69; that span reads GVGKTE. A disordered region spans residues 145–187; it reads KKANNNTNSNNPLESLFGGSIPNFGQNNDDEEETPTDEVKTKR. Residues D283, E348, and R420 each coordinate ATP.

Belongs to the ClpX chaperone family. HslU subfamily. As to quaternary structure, a double ring-shaped homohexamer of HslV is capped on each side by a ring-shaped HslU homohexamer. The assembly of the HslU/HslV complex is dependent on binding of ATP.

It localises to the cytoplasm. In terms of biological role, ATPase subunit of a proteasome-like degradation complex; this subunit has chaperone activity. The binding of ATP and its subsequent hydrolysis by HslU are essential for unfolding of protein substrates subsequently hydrolyzed by HslV. HslU recognizes the N-terminal part of its protein substrates and unfolds these before they are guided to HslV for hydrolysis. This Staphylococcus saprophyticus subsp. saprophyticus (strain ATCC 15305 / DSM 20229 / NCIMB 8711 / NCTC 7292 / S-41) protein is ATP-dependent protease ATPase subunit HslU.